The primary structure comprises 359 residues: Fructose-bisphosphate aldolase class 2 (359 aa).

Lysine 9 is subject to N6-acetyllysine. Serine 62 is a D-glyceraldehyde 3-phosphate binding site. Aspartate 110 functions as the Proton donor in the catalytic mechanism. Residues histidine 111, aspartate 145, glutamate 175, and histidine 227 each contribute to the Zn(2+) site. Glycine 228 provides a ligand contact to dihydroxyacetone phosphate. Histidine 265 is a Zn(2+) binding site. Dihydroxyacetone phosphate contacts are provided by residues 266–268 and 287–290; these read GGS and NIDT.

Belongs to the class II fructose-bisphosphate aldolase family. As to quaternary structure, homodimer. The cofactor is Zn(2+).

The catalysed reaction is beta-D-fructose 1,6-bisphosphate = D-glyceraldehyde 3-phosphate + dihydroxyacetone phosphate. The protein operates within carbohydrate degradation; glycolysis; D-glyceraldehyde 3-phosphate and glycerone phosphate from D-glucose: step 4/4. Functionally, catalyzes the aldol condensation of dihydroxyacetone phosphate (DHAP or glycerone-phosphate) with glyceraldehyde 3-phosphate (G3P) to form fructose 1,6-bisphosphate (FBP) in gluconeogenesis and the reverse reaction in glycolysis. The sequence is that of Fructose-bisphosphate aldolase class 2 (fbaA) from Escherichia coli O157:H7.